Here is a 425-residue protein sequence, read N- to C-terminus: Serine--tRNA ligase 2 (425 aa).

230 to 232 (TAE) is an L-serine binding site. 261-263 (REE) is a binding site for ATP. Glu-284 is an L-serine binding site. Position 348–351 (348–351 (EISS)) interacts with ATP. Ser-383 contacts L-serine.

The protein belongs to the class-II aminoacyl-tRNA synthetase family. Type-1 seryl-tRNA synthetase subfamily. Homodimer. The tRNA molecule binds across the dimer.

It is found in the cytoplasm. The enzyme catalyses tRNA(Ser) + L-serine + ATP = L-seryl-tRNA(Ser) + AMP + diphosphate + H(+). It carries out the reaction tRNA(Sec) + L-serine + ATP = L-seryl-tRNA(Sec) + AMP + diphosphate + H(+). The protein operates within aminoacyl-tRNA biosynthesis; selenocysteinyl-tRNA(Sec) biosynthesis; L-seryl-tRNA(Sec) from L-serine and tRNA(Sec): step 1/1. In terms of biological role, catalyzes the attachment of serine to tRNA(Ser). Is also able to aminoacylate tRNA(Sec) with serine, to form the misacylated tRNA L-seryl-tRNA(Sec), which will be further converted into selenocysteinyl-tRNA(Sec). The chain is Serine--tRNA ligase 2 from Lactiplantibacillus plantarum (strain ATCC BAA-793 / NCIMB 8826 / WCFS1) (Lactobacillus plantarum).